An 86-amino-acid polypeptide reads, in one-letter code: Small ribosomal subunit protein bS20 (86 aa).

This sequence belongs to the bacterial ribosomal protein bS20 family.

Its function is as follows. Binds directly to 16S ribosomal RNA. In Exiguobacterium sibiricum (strain DSM 17290 / CCUG 55495 / CIP 109462 / JCM 13490 / 255-15), this protein is Small ribosomal subunit protein bS20.